The primary structure comprises 388 residues: Tumor protein p53-inducible protein 13 (388 aa).

A signal peptide spans 1 to 27 (MVPPPPPPSRLLLVALVGLLSLHEVVA). Over 28–304 (EPAEEAGTRC…ARGPTPRTEE (277 aa)) the chain is Extracellular. Residues 305–325 (AAWAAMALTFLLVLLTLATLC) traverse the membrane as a helical segment. Topologically, residues 326 to 388 (TRLHRNFRRS…DSGPDSESSD (63 aa)) are cytoplasmic. Positions 361 to 372 (PSRRIKRSRRRP) are enriched in basic residues. Positions 361 to 388 (PSRRIKRSRRRPLLPPTPDSGPDSESSD) are disordered.

Its subcellular location is the cell membrane. It is found in the cytoplasm. Functionally, may act as a tumor suppressor. Inhibits tumor cell growth, when overexpressed. This Rattus norvegicus (Rat) protein is Tumor protein p53-inducible protein 13 (Tp53i13).